A 300-amino-acid polypeptide reads, in one-letter code: Non-secreted LysM effector LysM16 (300 aa).

The 47-residue stretch at 176 to 222 (EWHTVFSGDTCQLIEAEYGITLEKFIALNTYVNSTCGNIWPDYAYCV) folds into the LysM domain.

The protein belongs to the secreted LysM effector family.

Functionally, non-secreted LysM effector that might be involved in manipulation of host defenses for successful infection. In Penicillium expansum (Blue mold rot fungus), this protein is Non-secreted LysM effector LysM16.